The chain runs to 398 residues: MFHPIEEALEALKKGEVIIVVDDEDRENEGDFVALAEHATPEVVNFMATHGRGLICTPLSEDIAGRLDLHPMVDHNTDSHETAFTVSIDHRLTKTGISAQERSFTIQALLNEESVSDDFQRPGHIFPLIAKKGGVLKRAGHTEAAVDLAKACGSQGAGVICEIMNEDGTMARVPELAEIAERHQLKMITIKDLIEYRYNITTLVNREVDITLPTDFGTFRVYGYTNEVDGKEHLAFVMGDVPFNSEPVLVRVHSECLTGDVFASHRCDCGPQLHAALAQIAEEGRGVLLYLRQEGRGIGLINKLKAYRLQEQGYDTVEANEALGFLPDLRNYGIGAQILRDLGVQHMKLLTNNPRKIAGLEGYGLSISERVPLQMEASEHNKQYLQTKMKKLGHLLHF.

Residues 1–199 (MFHPIEEALE…IKDLIEYRYN (199 aa)) form a DHBP synthase region. D-ribulose 5-phosphate-binding positions include 26-27 (RE), Asp-31, 138-142 (RAGHT), and Glu-162. Glu-27 is a Mg(2+) binding site. His-141 lines the Mg(2+) pocket. The GTP cyclohydrolase II stretch occupies residues 200-398 (ITTLVNREVD…MKKLGHLLHF (199 aa)). A GTP-binding site is contributed by 251-255 (RVHSE). The Zn(2+) site is built by Cys-256, Cys-267, and Cys-269. GTP-binding positions include Gln-272, 294–296 (EGR), and Thr-316. Asp-328 functions as the Proton acceptor; for GTP cyclohydrolase activity in the catalytic mechanism. Residue Arg-330 is the Nucleophile; for GTP cyclohydrolase activity of the active site. GTP-binding residues include Thr-351 and Lys-356.

The protein in the N-terminal section; belongs to the DHBP synthase family. It in the C-terminal section; belongs to the GTP cyclohydrolase II family. The cofactor is Mg(2+). It depends on Mn(2+) as a cofactor. Zn(2+) is required as a cofactor.

It carries out the reaction D-ribulose 5-phosphate = (2S)-2-hydroxy-3-oxobutyl phosphate + formate + H(+). The enzyme catalyses GTP + 4 H2O = 2,5-diamino-6-hydroxy-4-(5-phosphoribosylamino)-pyrimidine + formate + 2 phosphate + 3 H(+). It participates in cofactor biosynthesis; riboflavin biosynthesis; 2-hydroxy-3-oxobutyl phosphate from D-ribulose 5-phosphate: step 1/1. Its pathway is cofactor biosynthesis; riboflavin biosynthesis; 5-amino-6-(D-ribitylamino)uracil from GTP: step 1/4. Functionally, catalyzes the conversion of D-ribulose 5-phosphate to formate and 3,4-dihydroxy-2-butanone 4-phosphate. Catalyzes the conversion of GTP to 2,5-diamino-6-ribosylamino-4(3H)-pyrimidinone 5'-phosphate (DARP), formate and pyrophosphate. This chain is Riboflavin biosynthesis protein RibBA, found in Bacillus velezensis (strain DSM 23117 / BGSC 10A6 / LMG 26770 / FZB42) (Bacillus amyloliquefaciens subsp. plantarum).